Here is a 440-residue protein sequence, read N- to C-terminus: tRNA-2-methylthio-N(6)-dimethylallyladenosine synthase (440 aa).

Residues Pro2–Gly118 form the MTTase N-terminal domain. [4Fe-4S] cluster is bound by residues Cys11, Cys47, Cys81, Cys155, Cys159, and Cys162. Residues Arg141–Glu370 form the Radical SAM core domain. The TRAM domain occupies Leu373–Arg436.

This sequence belongs to the methylthiotransferase family. MiaB subfamily. Monomer. The cofactor is [4Fe-4S] cluster.

The protein resides in the cytoplasm. It carries out the reaction N(6)-dimethylallyladenosine(37) in tRNA + (sulfur carrier)-SH + AH2 + 2 S-adenosyl-L-methionine = 2-methylsulfanyl-N(6)-dimethylallyladenosine(37) in tRNA + (sulfur carrier)-H + 5'-deoxyadenosine + L-methionine + A + S-adenosyl-L-homocysteine + 2 H(+). Catalyzes the methylthiolation of N6-(dimethylallyl)adenosine (i(6)A), leading to the formation of 2-methylthio-N6-(dimethylallyl)adenosine (ms(2)i(6)A) at position 37 in tRNAs that read codons beginning with uridine. The sequence is that of tRNA-2-methylthio-N(6)-dimethylallyladenosine synthase from Dictyoglomus thermophilum (strain ATCC 35947 / DSM 3960 / H-6-12).